The sequence spans 162 residues: Transcription antitermination protein RfaH (162 aa).

It belongs to the RfaH family. As to quaternary structure, interacts with both the nontemplate DNA and the RNA polymerase (RNAP). Monomer in solution.

Functionally, enhances distal genes transcription elongation in a specialized subset of operons that encode extracytoplasmic components. RfaH is recruited into a multi-component RNA polymerase complex by the ops element, which is a short conserved DNA sequence located downstream of the main promoter of these operons. Once bound, RfaH suppresses pausing and inhibits Rho-dependent and intrinsic termination at a subset of sites. Termination signals are bypassed, which allows complete synthesis of long RNA chains. Enhances expression of several operons involved in synthesis of lipopolysaccharides, exopolysaccharides, hemolysin, and sex factor. Also negatively controls expression and surface presentation of AG43 and possibly another AG43-independent factor that mediates cell-cell interactions and biofilm formation. In Escherichia coli (strain K12), this protein is Transcription antitermination protein RfaH.